Here is a 445-residue protein sequence, read N- to C-terminus: Exodeoxyribonuclease 7 large subunit (445 aa).

This sequence belongs to the XseA family. As to quaternary structure, heterooligomer composed of large and small subunits.

It localises to the cytoplasm. The catalysed reaction is Exonucleolytic cleavage in either 5'- to 3'- or 3'- to 5'-direction to yield nucleoside 5'-phosphates.. In terms of biological role, bidirectionally degrades single-stranded DNA into large acid-insoluble oligonucleotides, which are then degraded further into small acid-soluble oligonucleotides. The sequence is that of Exodeoxyribonuclease 7 large subunit from Delftia acidovorans (strain DSM 14801 / SPH-1).